The primary structure comprises 250 residues: Mediator of RNA polymerase II transcription subunit 8 (250 aa).

The segment at 217-250 is disordered; it reads SPMSAVSPGAGPLGKMPSGIKTNIKSANQVHPYR. Polar residues predominate over residues 236-250; that stretch reads IKTNIKSANQVHPYR.

This sequence belongs to the Mediator complex subunit 8 family. In terms of assembly, component of the Mediator complex.

The protein resides in the nucleus. Functionally, component of the Mediator complex, a coactivator involved in the regulated transcription of nearly all RNA polymerase II-dependent genes. Mediator functions as a bridge to convey information from gene-specific regulatory proteins to the basal RNA polymerase II transcription machinery. Mediator is recruited to promoters by direct interactions with regulatory proteins and serves as a scaffold for the assembly of a functional preinitiation complex with RNA polymerase II and the general transcription factors. This is Mediator of RNA polymerase II transcription subunit 8 (MED8) from Aedes aegypti (Yellowfever mosquito).